Reading from the N-terminus, the 989-residue chain is MESFRQVKNNNVDLISNNDPLDKNRLLIEDLWESVLREECPDDQAERLIQLKELSYSKQIDGDSSKTFKNEIVDIVNSMDLAESIAAARAFSLYFQLVNILEQRVEEDRYIQSFTNKDVQKSPDNLDPFAPALARQNAPVTFRELFYRLRKLNVPPGKLEELLQEMDIRLVFTAHPTEIVRHTIRHKQTRVANLLKKIQIEQFLTKEEKNSLKTQLKEEVRLWWRTDELHQFKPSVLDEVDYALHYFQQVLFNAMPQLRGRIAEALTDNYPDVQLPSESFCNFGSWVGSDRDGNPSVTPEITWRTACYQRQLMLERYIIATSNLRDQLSVSMQWSQVSSSLLESLETDRVKFPEIYEARATRYRSEPYRLKLSYILEKLRLTQERNNLLADSGWKFDLEGETDNKNLDKVESLYYKSVKEFTYDLELIKNSLISTDLNCESVNTLLTQVHIFGFSLASLDIRQESTRHSDAIQELTNYLDLSVQYDQMSEEEKIKWLIDELNTKRPLIPSDVHWTKTTEETFSVFKMVKRLQQEFGSRICHSYVISMSHSASDLLEVLLLAKEMGLLDQNSQKSKLLVVPLFETVEDLKRAPEVMEKLFKLDFYRSLLPKVGESFKPLQELMLGYSDSNKDSGFVSSNWEIHRAQIALQNLSSRNNILLRLFHGRGGSVGRGGGPAYQAILAQPSGTLKGRIKITEQGEVLASKYSLPELALYNLETVTTAVIQNSLVNNRLDATPEWNQLMSRLAETSRSHYRKLVHENPDLLNFFQEVTPIEEISKLQISSRPARRKKGAKDLSSLRAIPWVFGWTQSRFLLPSWFGVGTALSSELNLDPQQIELLRVLHQRWPFFRMLISKVEMTLSKVDLEVARYYVDTLGSKENKDSFDNIFEVISKEYNLTKSLILEITGKNKLLESDRDLKSSVSLRNKTIIPLGFLQVSLLRRLRDQTRQPPISEFFLDKDESTRAYSRSELLRGALLTINGIAAGMRNTG.

Catalysis depends on residues histidine 175 and lysine 630.

The protein belongs to the PEPCase type 1 family. Requires Mg(2+) as cofactor.

The catalysed reaction is oxaloacetate + phosphate = phosphoenolpyruvate + hydrogencarbonate. In terms of biological role, forms oxaloacetate, a four-carbon dicarboxylic acid source for the tricarboxylic acid cycle. This is Phosphoenolpyruvate carboxylase from Prochlorococcus marinus (strain AS9601).